Consider the following 326-residue polypeptide: uncharacterized protein (326 aa).

The protein belongs to the transferase hexapeptide repeat family.

This is an uncharacterized protein from Escherichia coli (strain K12).